Reading from the N-terminus, the 354-residue chain is S-adenosylmethionine-dependent nucleotide dehydratase RSAD2 (354 aa).

Residues 62–282 (AMTPTSVNYH…LDRHSSISCL (221 aa)) form the Radical SAM core domain. Residues cysteine 76, cysteine 80, and cysteine 83 each contribute to the [4Fe-4S] cluster site.

Belongs to the radical SAM superfamily. RSAD2 family. Requires [4Fe-4S] cluster as cofactor. In terms of tissue distribution, constitutively expressed in spleen, head kidney and trunk kidney. Following viral infection, detected in most organs including liver, gill, intestine, heart, muscle and brain.

It localises to the endoplasmic reticulum membrane. In terms of biological role, interferon-inducible iron-sulfur (4FE-4S) cluster-binding antiviral protein which plays a major role in the cell antiviral state induced by type I and type II interferon. This Siniperca chuatsi (Mandarin fish) protein is S-adenosylmethionine-dependent nucleotide dehydratase RSAD2.